We begin with the raw amino-acid sequence, 215 residues long: MGKVYDWFEERLEIQAIADDISSKYVPPHVNIFYCFGGIVFTCFLVQVATGFAMTFYYRPSVVDAFASVEYIMTSVNFGWLIRSIHRWSASMMVMMMVLHVFRVYLTGGFKKPRELTWVTGVILAVVTVSFGVTGYSLPWDQVGFWACKIVTGVPAAVPVVGPPLVLVLRGGESVGQSTLTRFYSAHTFVLPLAAAVLMLTHFLMIRKQGISGPL.

A helical membrane pass occupies residues 32 to 52 (IFYCFGGIVFTCFLVQVATGF). Cysteine 35 is a heme c binding site. Residues histidine 86 and histidine 100 each contribute to the heme b site. Transmembrane regions (helical) follow at residues 90-110 (ASMM…TGGF), 116-136 (LTWV…VTGY), and 186-206 (AHTF…FLMI). Positions 187 and 202 each coordinate heme b.

This sequence belongs to the cytochrome b family. PetB subfamily. As to quaternary structure, the 4 large subunits of the cytochrome b6-f complex are cytochrome b6, subunit IV (17 kDa polypeptide, PetD), cytochrome f and the Rieske protein, while the 4 small subunits are PetG, PetL, PetM and PetN. The complex functions as a dimer. Heme b serves as cofactor. The cofactor is heme c.

Its subcellular location is the plastid. The protein resides in the chloroplast thylakoid membrane. Component of the cytochrome b6-f complex, which mediates electron transfer between photosystem II (PSII) and photosystem I (PSI), cyclic electron flow around PSI, and state transitions. The polypeptide is Cytochrome b6 (Trieres chinensis (Marine centric diatom)).